We begin with the raw amino-acid sequence, 602 residues long: Lysine--tRNA ligase, chloroplastic/mitochondrial (602 aa).

The segment covering 50–62 has biased composition (low complexity); the sequence is SSSSSSATTAETS. The tract at residues 50 to 83 is disordered; sequence SSSSSSATTAETSKPSGRNRRSASSSNSTSDREA. The segment at residues 136-214 is a DNA-binding region (OB); it reads VSIAGRVVAR…SICVNSFSIL (79 aa). Positions 285 and 309 each coordinate substrate. ATP-binding positions include 331 to 333 and 339 to 340; these read RNE and HN. Residues Glu-347 and Tyr-349 each coordinate substrate. Glu-492 and Glu-499 together coordinate Ca(2+). 499–500 contacts ATP; it reads EM. Residues Asn-502 and Glu-506 each coordinate substrate. The segment covering 524 to 543 has biased composition (basic and acidic residues); it reads HNAKRAEAVRESPEPNAKKD. Residues 524-550 form a disordered region; that stretch reads HNAKRAEAVRESPEPNAKKDDDDDESY. An ATP-binding site is contributed by 575–578; the sequence is GIDR.

It belongs to the class-II aminoacyl-tRNA synthetase family. The cofactor is Ca(2+).

The protein localises to the plastid. It localises to the chloroplast. It is found in the mitochondrion. The enzyme catalyses tRNA(Lys) + L-lysine + ATP = L-lysyl-tRNA(Lys) + AMP + diphosphate. In terms of biological role, catalyzes the specific attachment of an amino acid to its cognate tRNA in a 2 step reaction: the amino acid (AA) is first activated by ATP to form AA-AMP and then transferred to the acceptor end of the tRNA. The sequence is that of Lysine--tRNA ligase, chloroplastic/mitochondrial from Arabidopsis thaliana (Mouse-ear cress).